The sequence spans 116 residues: Large ribosomal subunit protein bL17 (116 aa).

Belongs to the bacterial ribosomal protein bL17 family. Part of the 50S ribosomal subunit. Contacts protein L32.

The protein is Large ribosomal subunit protein bL17 of Prochlorococcus marinus (strain NATL2A).